We begin with the raw amino-acid sequence, 258 residues long: Intron-associated endonuclease 2 (258 aa).

The GIY-YIG domain occupies S14–L96.

Its function is as follows. This endonuclease is specific to the nrdD gene splice junction and is involved in intron homing. This Escherichia coli (Bacteriophage T4) protein is Intron-associated endonuclease 2 (ITEVIIR).